Here is a 340-residue protein sequence, read N- to C-terminus: Heat-inducible transcription repressor HrcA (340 aa).

Belongs to the HrcA family.

Functionally, negative regulator of class I heat shock genes (grpE-dnaK-dnaJ and groELS operons). Prevents heat-shock induction of these operons. The polypeptide is Heat-inducible transcription repressor HrcA (Burkholderia mallei (strain NCTC 10247)).